The chain runs to 414 residues: Diaminopimelate decarboxylase (414 aa).

Lysine 52 is subject to N6-(pyridoxal phosphate)lysine. Pyridoxal 5'-phosphate is bound by residues glycine 231 and 265–268; that span reads EPGR. Positions 268, 304, and 308 each coordinate substrate. Residue cysteine 334 is the Proton donor of the active site. Residues glutamate 335 and tyrosine 362 each contribute to the substrate site. Tyrosine 362 provides a ligand contact to pyridoxal 5'-phosphate.

The protein belongs to the Orn/Lys/Arg decarboxylase class-II family. LysA subfamily. As to quaternary structure, homodimer. Pyridoxal 5'-phosphate serves as cofactor.

The enzyme catalyses meso-2,6-diaminopimelate + H(+) = L-lysine + CO2. Its pathway is amino-acid biosynthesis; L-lysine biosynthesis via DAP pathway; L-lysine from DL-2,6-diaminopimelate: step 1/1. In terms of biological role, specifically catalyzes the decarboxylation of meso-diaminopimelate (meso-DAP) to L-lysine. This is Diaminopimelate decarboxylase from Neisseria meningitidis serogroup B (strain ATCC BAA-335 / MC58).